A 375-amino-acid polypeptide reads, in one-letter code: Alcohol dehydrogenase 1A (375 aa).

Ser2 bears the N-acetylserine mark. Ser23 bears the Phosphoserine mark. Cys47 contributes to the Zn(2+) binding site. An NAD(+)-binding site is contributed by 48-52 (GTDDH). His68, Cys98, Cys101, Cys104, Cys112, and Cys175 together coordinate Zn(2+). Residues 200–205 (GLGGVG), Asp224, Lys229, Ile270, 293–295 (VGV), 318–320 (AVL), and Arg370 contribute to the NAD(+) site.

The protein belongs to the zinc-containing alcohol dehydrogenase family. Dimer of identical or heterodimer of closely related subunits alpha, beta, or gamma that are encoded by genes ADH1A, ADH1B, and ADH1C, respectively. Zn(2+) is required as a cofactor.

It is found in the cytoplasm. It carries out the reaction a primary alcohol + NAD(+) = an aldehyde + NADH + H(+). It catalyses the reaction a secondary alcohol + NAD(+) = a ketone + NADH + H(+). The enzyme catalyses butan-1-ol + NAD(+) = butanal + NADH + H(+). The catalysed reaction is 1-propanol + NAD(+) = propanal + NADH + H(+). Functionally, alcohol dehydrogenase. Oxidizes primary as well as secondary alcohols. Ethanol is a very poor substrate. In Pongo abelii (Sumatran orangutan), this protein is Alcohol dehydrogenase 1A (ADH1A).